Reading from the N-terminus, the 185-residue chain is Protein N-terminal glutamine amidohydrolase (185 aa).

Residues Cys-14, His-62, and Asp-78 contribute to the active site.

The protein belongs to the NTAQ1 family. In terms of assembly, monomer.

It carries out the reaction N-terminal L-glutaminyl-[protein] + H2O = N-terminal L-glutamyl-[protein] + NH4(+). Mediates the side-chain deamidation of N-terminal glutamine residues to glutamate, an important step in N-end rule pathway of protein degradation. Conversion of the resulting N-terminal glutamine to glutamate renders the protein susceptible to arginylation, polyubiquitination and degradation as specified by the N-end rule. Does not act on substrates with internal or C-terminal glutamine and does not act on non-glutamine residues in any position. The protein is Protein N-terminal glutamine amidohydrolase of Caenorhabditis briggsae.